The primary structure comprises 447 residues: Putative vacuolar cation/proton exchanger 4 (447 aa).

The segment at methionine 1–glutamate 29 is disordered. Residues methionine 1–lysine 65 lie on the Cytoplasmic side of the membrane. Over residues asparagine 10–serine 22 the composition is skewed to polar residues. The chain crosses the membrane as a helical span at residues isoleucine 66–leucine 86. Residues asparagine 87–tyrosine 93 are Extracellular-facing. The helical transmembrane segment at glycine 94–alanine 114 threads the bilayer. Topologically, residues threonine 115–glutamate 122 are cytoplasmic. The helical transmembrane segment at valine 123–alanine 143 threads the bilayer. Residues glycine 132–valine 167 are cation selection. The Extracellular portion of the chain corresponds to leucine 144–serine 159. Residues isoleucine 160 to glycine 180 traverse the membrane as a helical segment. At lysine 181–aspartate 190 the chain is on the cytoplasmic side. A helical membrane pass occupies residues alanine 191–leucine 211. At histidine 212–glutamate 224 the chain is on the extracellular side. Residues leucine 225–phenylalanine 245 form a helical membrane-spanning segment. Over glutamine 246–arginine 286 the chain is Cytoplasmic. Residues glutamate 287–valine 307 traverse the membrane as a helical segment. Over aspartate 308–asparagine 318 the chain is Extracellular. The chain crosses the membrane as a helical span at residues isoleucine 319–alanine 339. The segment at glycine 333–glycine 368 is cation selection. Residues asparagine 340–serine 353 lie on the Cytoplasmic side of the membrane. A helical membrane pass occupies residues leucine 354 to valine 374. The Extracellular segment spans residues methionine 375–aspartate 384. A helical transmembrane segment spans residues leucine 385–leucine 405. At leucine 406 to cysteine 413 the chain is on the cytoplasmic side. The helical transmembrane segment at valine 414–alanine 434 threads the bilayer. Residues aspartate 435–asparagine 447 lie on the Extracellular side of the membrane.

It belongs to the Ca(2+):cation antiporter (CaCA) (TC 2.A.19) family. Cation/proton exchanger (CAX) subfamily.

The protein localises to the vacuole membrane. In terms of biological role, vacuolar cation/proton exchanger (CAX). Translocates Ca(2+) and other metal ions into vacuoles using the proton gradient formed by H(+)-ATPase and H(+)-pyrophosphatase. This chain is Putative vacuolar cation/proton exchanger 4, found in Oryza sativa subsp. japonica (Rice).